The following is a 272-amino-acid chain: Shikimate dehydrogenase (NADP(+)) (272 aa).

Shikimate-binding positions include 14 to 16 and Thr-61; that span reads SKS. Lys-65 functions as the Proton acceptor in the catalytic mechanism. Residue Glu-77 participates in NADP(+) binding. Residues Asn-86 and Asp-102 each coordinate shikimate. NADP(+) is bound by residues 126 to 130, 149 to 154, and Met-213; these read GAGGA and NRTVFR. Tyr-215 provides a ligand contact to shikimate. Gly-237 lines the NADP(+) pocket.

The protein belongs to the shikimate dehydrogenase family. Homodimer.

The catalysed reaction is shikimate + NADP(+) = 3-dehydroshikimate + NADPH + H(+). It functions in the pathway metabolic intermediate biosynthesis; chorismate biosynthesis; chorismate from D-erythrose 4-phosphate and phosphoenolpyruvate: step 4/7. In terms of biological role, involved in the biosynthesis of the chorismate, which leads to the biosynthesis of aromatic amino acids. Catalyzes the reversible NADPH linked reduction of 3-dehydroshikimate (DHSA) to yield shikimate (SA). The chain is Shikimate dehydrogenase (NADP(+)) from Escherichia coli O127:H6 (strain E2348/69 / EPEC).